The chain runs to 421 residues: Prenyltransferase asqH2 (421 aa).

The disordered stretch occupies residues 1-28 (MDRNSFTAYGPATGAITESGEQENDHTK). An L-tryptophan-binding site is contributed by Glu-105. Substrate-binding residues include Arg-119, Arg-272, Lys-274, Tyr-276, and Tyr-341.

This sequence belongs to the tryptophan dimethylallyltransferase family.

The catalysed reaction is yaequinolone E + dimethylallyl diphosphate + H2O = [(1'E)-3'-hydroxy-3',7'-dimethylocta-1',6'-dien-1'-yl]-quinolinone B + diphosphate. It participates in secondary metabolite biosynthesis. It functions in the pathway alkaloid biosynthesis. Its pathway is mycotoxin biosynthesis. In terms of biological role, prenyltransferase; part of the gene cluster that mediates the biosynthesis of the aspoquinolone mycotoxins. Within the pathway, the prenyltransferase asqH2 performs the second alkylation with DMAPP at delta(3') double bond to yield a carbenium ion intermediate, which can be attacked by H(2)O to yield a styrenyl quinolone containing a C3'-hydroxyprenyl chain. The first step of the pathway is catalyzed by the nonribosomal peptide synthetase asqK that condenses anthranilic acid and O-methyl-L-tyrosine to produce 4'-methoxycyclopeptin. 4'-methoxycyclopeptin is then converted to 4'-methoxydehydrocyclopeptin by the ketoglutarate-dependent dioxygenase asqJ. AsqJ also converts its first product 4'-methoxydehydrocyclopeptin to 4'-methoxycyclopenin. The following conversion of 4'-methoxycyclopenin into 4'-methoxyviridicatin is catalyzed by the cyclopenase asqI. 4'-methoxyviridicatin is the precursor of quinolone natural products, and is further converted to quinolinone B. The prenyltransferase asqH1 then catalyzes the canonical Friedel-Crafts alkylation of quinolinone B with dimethylallyl cation to yield dimethylallyl quinolone, which is subjected to FAD-dependent dehydrogenation by the FAD-linked oxidoreductase asqF to yield conjugated aryl diene. The delta(3') double bond then serves as the site of the second alkylation with DMAPP catalyzed by the prenyltransferase asqH2 to yield a carbenium ion intermediate, which can be attacked by H(2)O to yield a styrenyl quinolone containing a C3'-hydroxyprenyl chain. The FAD-dependent monooxygenase asqG performs epoxidation of the terminal C7'-C8' olefin. Finally, after dehydratation of the epoxide at C3 by asqC, the quinolone epoxide rearrangement protein asqO catalyzes an enzymatic 3-exo-tet cyclization to yield the cyclopropyl-THF ring system in aspoquinolone. The chain is Prenyltransferase asqH2 from Emericella nidulans (strain FGSC A4 / ATCC 38163 / CBS 112.46 / NRRL 194 / M139) (Aspergillus nidulans).